A 371-amino-acid chain; its full sequence is S-adenosylmethionine:tRNA ribosyltransferase-isomerase (371 aa).

This sequence belongs to the QueA family. As to quaternary structure, monomer.

It is found in the cytoplasm. The catalysed reaction is 7-aminomethyl-7-carbaguanosine(34) in tRNA + S-adenosyl-L-methionine = epoxyqueuosine(34) in tRNA + adenine + L-methionine + 2 H(+). The protein operates within tRNA modification; tRNA-queuosine biosynthesis. Functionally, transfers and isomerizes the ribose moiety from AdoMet to the 7-aminomethyl group of 7-deazaguanine (preQ1-tRNA) to give epoxyqueuosine (oQ-tRNA). The polypeptide is S-adenosylmethionine:tRNA ribosyltransferase-isomerase (Nitratidesulfovibrio vulgaris (strain ATCC 29579 / DSM 644 / CCUG 34227 / NCIMB 8303 / VKM B-1760 / Hildenborough) (Desulfovibrio vulgaris)).